Consider the following 157-residue polypeptide: Protein FAM219A (157 aa).

Met1 carries the post-translational modification N-acetylmethionine. The interval Met1–Ser103 is disordered. Residues Ser17–Arg33 are compositionally biased toward basic and acidic residues. A compositionally biased stretch (polar residues) spans Lys38–Lys52. A phosphoserine mark is found at Ser44 and Ser74. The residue at position 85 (Thr85) is a Phosphothreonine. A phosphoserine mark is found at Ser87 and Ser94. Over residues Ser94–Ser103 the composition is skewed to low complexity.

The protein belongs to the FAM219 family.

The polypeptide is Protein FAM219A (Fam219a) (Mus musculus (Mouse)).